The following is a 227-amino-acid chain: Ribonuclease 3 (227 aa).

The 130-residue stretch at 4 to 133 folds into the RNase III domain; the sequence is FEKLEKLLSY…LIAAIYLDSN (130 aa). Glutamate 46 contributes to the Mg(2+) binding site. The active site involves aspartate 50. Mg(2+) is bound by residues asparagine 119 and glutamate 122. Residue glutamate 122 is part of the active site. The DRBM domain maps to 158–226; the sequence is DPKTALQEWA…ARSLLHRLKN (69 aa).

This sequence belongs to the ribonuclease III family. In terms of assembly, homodimer. It depends on Mg(2+) as a cofactor.

The protein resides in the cytoplasm. It catalyses the reaction Endonucleolytic cleavage to 5'-phosphomonoester.. In terms of biological role, digests double-stranded RNA. Involved in the processing of primary rRNA transcript to yield the immediate precursors to the large and small rRNAs (23S and 16S). Processes some mRNAs, and tRNAs when they are encoded in the rRNA operon. Processes pre-crRNA and tracrRNA of type II CRISPR loci if present in the organism. The polypeptide is Ribonuclease 3 (Rickettsia africae (strain ESF-5)).